The primary structure comprises 654 residues: DNA ligase (654 aa).

Residues 32–36 (DAVYD) and 81–82 (SL) contribute to the NAD(+) site. Lys-112 (N6-AMP-lysine intermediate) is an active-site residue. NAD(+) contacts are provided by Arg-133, Glu-167, and Lys-306. Zn(2+) is bound by residues Cys-400, Cys-403, Cys-416, and Cys-421. Positions 577-654 (ESSSIFSHKT…EEELLKYLKE (78 aa)) constitute a BRCT domain.

It belongs to the NAD-dependent DNA ligase family. LigA subfamily. It depends on Mg(2+) as a cofactor. Mn(2+) is required as a cofactor.

It carries out the reaction NAD(+) + (deoxyribonucleotide)n-3'-hydroxyl + 5'-phospho-(deoxyribonucleotide)m = (deoxyribonucleotide)n+m + AMP + beta-nicotinamide D-nucleotide.. Its function is as follows. DNA ligase that catalyzes the formation of phosphodiester linkages between 5'-phosphoryl and 3'-hydroxyl groups in double-stranded DNA using NAD as a coenzyme and as the energy source for the reaction. It is essential for DNA replication and repair of damaged DNA. The polypeptide is DNA ligase (Helicobacter acinonychis (strain Sheeba)).